The primary structure comprises 324 residues: Esterase FPSE_08126 (324 aa).

Catalysis depends on residues Ser-156, Asp-255, and His-285.

It belongs to the AB hydrolase 3 family.

Esterase; part of the Fusarium detoxification of benzoxazolinone cluster involved in the degradation of benzoxazolinones produced by the host plant. Maize, wheat, and rye produce the 2 benzoxazinone phytoanticipins 2,4-dihy-droxy-7-methoxy-1,4-benzoxazin-3-one (DIMBOA) and 2,4-dihydroxy-1,4-benzoxazin-3-one (DIBOA) that, due to their inherent instability once released, spontaneously degrade to the more stable corresponding benzoxazolinones, 6-methoxy-2-benzoxazolinone (MBOA) and 2-benzoxazolinone (BOA), respectively. The first step in the detoxification of benzoxazolinones involves the hydrolysis of the cyclic ester bond of benzoxazolinones by the gamma-lactamase FDB1 to aminophenols. FDB1 is able to convert 2-benzoxazolinone (BOA) into 2-aminophenol (2-AP), as well as 6-methoxy-2-benzoxazolinone (MBOA) into 5-methoxy-2-aminophenol (2-AMP). The N-malonyltransferase FDB2 then metabolizes aminophenols via N-malonylation to non-toxic malonamic acids. FDB2 converts 2-AP into N-(2-hydroxyphenyl) malonamic acid (HPMA) and 2-AMP into N-(2-hydroxy-4-methoxyphenyl) malonamic acid (HMPMA). The cluster also contains 2 transcription factors (FDB3 and FPSE_08121), an aldo-keto reductase (FPSE_08125) that possibly associates with a ketone component of BOA and MBOA degradation, an esterase (FPSE_08126), an acyl-CoA transferase (FPSE_08120), a solute carrier protein (FPSE_08119) and a transmembrane transporter (FPSE_08127) proposed to shuttle metabolites of benzoxazolinone degradation. This chain is Esterase FPSE_08126, found in Fusarium pseudograminearum (strain CS3096) (Wheat and barley crown-rot fungus).